The following is a 309-amino-acid chain: MDALKSAGRAIIRSPSIAKQSWGGGKHKKLPENWTDTRETLLEGMLFHLKYLGMTLVEQPKGEELSATAVKRIVATAKASGKKLQKVLLKVSPRGIILYDSASNQLIENVSIYRISYCTADKMHDKVFAYIAQSQQNETLECHAFLCTKRKMAQAVTLTVAQAFKVAFEFWQVSRENKDKREKSGSDGEGASSSQSDGSSSITSLKASASANLLDFEDCTKAFDVLNASDNHIEDLFRQNSTNENNNIVWELDDGLDEAFARLAESRTNPQVLDIGLTANDLQSEECLSPTSWDKLELNPAEADELFMF.

One can recognise a PID domain in the interval 41–195; it reads LLEGMLFHLK…SDGEGASSSQ (155 aa). The interval 179–201 is disordered; it reads DKREKSGSDGEGASSSQSDGSSS. Over residues 189–201 the composition is skewed to low complexity; the sequence is EGASSSQSDGSSS. The Clathrin box signature appears at 213–217; it reads LLDFE. The segment at 250–277 is AP-2 complex binding; sequence WELDDGLDEAFARLAESRTNPQVLDIGL. Residues 258–267 carry the [DE]-X(1,2)-F-X-X-[FL]-X-X-X-R motif motif; that stretch reads EAFARLAESR.

As to quaternary structure, interacts (via PID domain) with ldlr (via NPXY motif). Binds to soluble clathrin trimers and to the adapter protein complex 2 (AP-2, beta 2 subunit). Binds to phosphoinositides, which regulate clathrin bud assembly at the cell surface. Interacts with the VLDL receptor (vldlr). Interacts with the vitellogenin receptor. As to expression, expressed at high level during oogenesis and embryogenesis. Found at low level in the adult liver and spleen. Found at very low level in testis and heart. Not found in the oocyte vegetal cortex.

The protein localises to the cytoplasm. Adapter protein (clathrin-associated sorting protein (CLASP)) required for efficient endocytosis of the LDL receptor (LDLR). Also involved in the vitellogenin receptor mediated endocytosis of nutrients during oogenesis. This is Low density lipoprotein receptor adapter protein 1-B from Xenopus laevis (African clawed frog).